A 161-amino-acid polypeptide reads, in one-letter code: MLILDRSSPQIFISNEQQDVSIDLQSAQRLVVLFLELQKVSTDQVYVYFLDDTALAQLHDEQFSDPSPTDTITLPIDKPGIASFPHVLGEAFVSPKAAMRFLEQYTEDQLYHEISRYVVHSLLHMLGYDDQTDEDKRIMQEQEDVSLSFLAEHQALLRPAV.

Positions 120, 124, and 130 each coordinate Zn(2+).

It belongs to the endoribonuclease YbeY family. It depends on Zn(2+) as a cofactor.

It is found in the cytoplasm. In terms of biological role, single strand-specific metallo-endoribonuclease involved in late-stage 70S ribosome quality control and in maturation of the 3' terminus of the 16S rRNA. The chain is Endoribonuclease YbeY from Chlamydia trachomatis serovar A (strain ATCC VR-571B / DSM 19440 / HAR-13).